The chain runs to 104 residues: Putative heat shock protein PS1 (104 aa).

N-linked (GlcNAc...) asparagine glycans are attached at residues asparagine 11 and asparagine 18. Asparagine 18 contributes to the ATP binding site.

It belongs to the heat shock protein 90 family. As to quaternary structure, homodimer.

It localises to the cytoplasm. Its function is as follows. Putative molecular chaperone that may promote the maturation, structural maintenance and proper regulation of specific target proteins. The chain is Putative heat shock protein PS1 from Pinus strobus (Eastern white pine).